The sequence spans 269 residues: MTTPIPTPYEDLLRDVLANGSHKSDRTGTGTRSVFGRQLRFDLADGFPLITTKRVHFKSIAYELLWFLRGDSNVGWLRENGVSIWDEWADERGELGPVYGVQWRSWPSPDGTHIDQIQQVVDTLRRDPDSRRIIVSAWNVADIPDMALAPCHAFFQFYVADGKLSCQLYQRSADMFLGVPFNIASYALLTLMVAQQVGLEPGEFVWTGGDVHIYDNHIEQVNEQLSRNPFPAPALRFARRPESVFDYRYEDFVLEGYRHHPAIRAAVAV.

Arginine 26 contacts dUMP. Histidine 56 contributes to the (6R)-5,10-methylene-5,6,7,8-tetrahydrofolate binding site. Residue 131 to 132 (RR) participates in dUMP binding. Cysteine 151 serves as the catalytic Nucleophile. DUMP-binding positions include 171 to 174 (RSAD), asparagine 182, and 212 to 214 (HIY). Aspartate 174 provides a ligand contact to (6R)-5,10-methylene-5,6,7,8-tetrahydrofolate. Alanine 268 is a (6R)-5,10-methylene-5,6,7,8-tetrahydrofolate binding site.

This sequence belongs to the thymidylate synthase family. Bacterial-type ThyA subfamily. Homodimer.

Its subcellular location is the cytoplasm. It catalyses the reaction dUMP + (6R)-5,10-methylene-5,6,7,8-tetrahydrofolate = 7,8-dihydrofolate + dTMP. It functions in the pathway pyrimidine metabolism; dTTP biosynthesis. In terms of biological role, catalyzes the reductive methylation of 2'-deoxyuridine-5'-monophosphate (dUMP) to 2'-deoxythymidine-5'-monophosphate (dTMP) while utilizing 5,10-methylenetetrahydrofolate (mTHF) as the methyl donor and reductant in the reaction, yielding dihydrofolate (DHF) as a by-product. This enzymatic reaction provides an intracellular de novo source of dTMP, an essential precursor for DNA biosynthesis. The polypeptide is Thymidylate synthase (Leifsonia xyli subsp. xyli (strain CTCB07)).